The primary structure comprises 104 residues: Thioredoxin (104 aa).

The Thioredoxin domain maps to 2-104 (AIVKATDQSF…ALQELVNKHL (103 aa)). A disulfide bond links cysteine 29 and cysteine 32.

Belongs to the thioredoxin family.

Functionally, participates in various redox reactions through the reversible oxidation of its active center dithiol to a disulfide and catalyzes dithiol-disulfide exchange reactions. In Bacillus subtilis (strain 168), this protein is Thioredoxin (trxA).